An 83-amino-acid chain; its full sequence is Calsensin (83 aa).

EF-hand domains are found at residues K4–Y39 and K46–Q81. Ca(2+) contacts are provided by D17, N19, D21, Y23, E28, D59, N61, D63, K65, and E70.

Selectively expressed in a small group of neurons.

It localises to the cytoplasm. In terms of biological role, may function as a trigger protein which interacts with a larger protein. May mediate calcium-dependent signal transduction events in the growth cones and axons of a small group of sensory neurons which fasciculate in a single axon tract. The sequence is that of Calsensin from Haemopis marmorata (Green horse leech).